Reading from the N-terminus, the 156-residue chain is Small ribosomal subunit protein uS7 (156 aa).

Belongs to the universal ribosomal protein uS7 family. As to quaternary structure, part of the 30S ribosomal subunit. Contacts proteins S9 and S11.

Functionally, one of the primary rRNA binding proteins, it binds directly to 16S rRNA where it nucleates assembly of the head domain of the 30S subunit. Is located at the subunit interface close to the decoding center, probably blocks exit of the E-site tRNA. This is Small ribosomal subunit protein uS7 from Shewanella denitrificans (strain OS217 / ATCC BAA-1090 / DSM 15013).